The sequence spans 478 residues: Sulfate adenylyltransferase subunit 1 (478 aa).

A tr-type G domain is found at 24–240 (KSLLRFLTCG…VLENVDIDAD (217 aa)). The interval 33–40 (GSVDDGKS) is G1. 33–40 (GSVDDGKS) is a GTP binding site. The G2 stretch occupies residues 91-95 (GITID). Residues 112-115 (DTPG) are G3. GTP-binding positions include 112–116 (DTPGH) and 167–170 (NKMD). Positions 167 to 170 (NKMD) are G4. The tract at residues 206-208 (SAL) is G5.

This sequence belongs to the TRAFAC class translation factor GTPase superfamily. Classic translation factor GTPase family. CysN/NodQ subfamily. In terms of assembly, heterodimer composed of CysD, the smaller subunit, and CysN.

It carries out the reaction sulfate + ATP + H(+) = adenosine 5'-phosphosulfate + diphosphate. It functions in the pathway sulfur metabolism; hydrogen sulfide biosynthesis; sulfite from sulfate: step 1/3. Its function is as follows. With CysD forms the ATP sulfurylase (ATPS) that catalyzes the adenylation of sulfate producing adenosine 5'-phosphosulfate (APS) and diphosphate, the first enzymatic step in sulfur assimilation pathway. APS synthesis involves the formation of a high-energy phosphoric-sulfuric acid anhydride bond driven by GTP hydrolysis by CysN coupled to ATP hydrolysis by CysD. This Aliivibrio fischeri (strain ATCC 700601 / ES114) (Vibrio fischeri) protein is Sulfate adenylyltransferase subunit 1.